The chain runs to 431 residues: Gamma-glutamyl phosphate reductase (431 aa).

Belongs to the gamma-glutamyl phosphate reductase family.

Its subcellular location is the cytoplasm. It catalyses the reaction L-glutamate 5-semialdehyde + phosphate + NADP(+) = L-glutamyl 5-phosphate + NADPH + H(+). The protein operates within amino-acid biosynthesis; L-proline biosynthesis; L-glutamate 5-semialdehyde from L-glutamate: step 2/2. In terms of biological role, catalyzes the NADPH-dependent reduction of L-glutamate 5-phosphate into L-glutamate 5-semialdehyde and phosphate. The product spontaneously undergoes cyclization to form 1-pyrroline-5-carboxylate. The polypeptide is Gamma-glutamyl phosphate reductase (Methylobacterium sp. (strain 4-46)).